Reading from the N-terminus, the 377-residue chain is Alternative oxidase, mitochondrial (377 aa).

The chain crosses the membrane as a helical span at residues 149–169 (LSRFIFLESIAAVPGMVAGML). Residues Glu-156, Glu-195, and His-198 each contribute to the Fe cation site. A helical transmembrane segment spans residues 214–234 (ILIIGAQGVYFNAMFVAYLIS). Residues Glu-246, Glu-303, and His-306 each coordinate Fe cation.

It belongs to the alternative oxidase family. Fe cation serves as cofactor.

The protein localises to the mitochondrion inner membrane. Functionally, catalyzes cyanide-resistant oxygen consumption. May increase respiration when the cytochrome respiratory pathway is restricted, or in response to low temperatures. In Pyricularia oryzae (strain 70-15 / ATCC MYA-4617 / FGSC 8958) (Rice blast fungus), this protein is Alternative oxidase, mitochondrial (AOX1).